The chain runs to 234 residues: Orotate phosphoribosyltransferase (234 aa).

Lysine 30 is a binding site for 5-phospho-alpha-D-ribose 1-diphosphate. 38–39 (FF) lines the orotate pocket. 5-phospho-alpha-D-ribose 1-diphosphate is bound by residues 76–77 (YK), arginine 103, lysine 104, lysine 107, histidine 109, and 128–136 (DDVITAGTA). Orotate-binding residues include threonine 132 and arginine 160.

Belongs to the purine/pyrimidine phosphoribosyltransferase family. PyrE subfamily. In terms of assembly, homodimer. It depends on Mg(2+) as a cofactor.

The catalysed reaction is orotidine 5'-phosphate + diphosphate = orotate + 5-phospho-alpha-D-ribose 1-diphosphate. It functions in the pathway pyrimidine metabolism; UMP biosynthesis via de novo pathway; UMP from orotate: step 1/2. Catalyzes the transfer of a ribosyl phosphate group from 5-phosphoribose 1-diphosphate to orotate, leading to the formation of orotidine monophosphate (OMP). The sequence is that of Orotate phosphoribosyltransferase from Chromohalobacter salexigens (strain ATCC BAA-138 / DSM 3043 / CIP 106854 / NCIMB 13768 / 1H11).